The chain runs to 428 residues: Gamma-glutamyl phosphate reductase (428 aa).

It belongs to the gamma-glutamyl phosphate reductase family.

The protein localises to the cytoplasm. The enzyme catalyses L-glutamate 5-semialdehyde + phosphate + NADP(+) = L-glutamyl 5-phosphate + NADPH + H(+). It functions in the pathway amino-acid biosynthesis; L-proline biosynthesis; L-glutamate 5-semialdehyde from L-glutamate: step 2/2. Catalyzes the NADPH-dependent reduction of L-glutamate 5-phosphate into L-glutamate 5-semialdehyde and phosphate. The product spontaneously undergoes cyclization to form 1-pyrroline-5-carboxylate. In Mesorhizobium japonicum (strain LMG 29417 / CECT 9101 / MAFF 303099) (Mesorhizobium loti (strain MAFF 303099)), this protein is Gamma-glutamyl phosphate reductase.